Reading from the N-terminus, the 1094-residue chain is Probable serine/threonine-protein kinase kinX (1094 aa).

In terms of domain architecture, Protein kinase spans 22–281 (LDFISEIGSG…QTLKQIKTTL (260 aa)). ATP-binding positions include 28–36 (IGSGGFGKV) and K49. The active-site Proton acceptor is D146. Disordered stretches follow at residues 301 to 884 (TTNG…SVED) and 946 to 1083 (IKVE…PNNK). Residues 330–344 (YDDDDDDDDDDDDND) are compositionally biased toward acidic residues. The segment covering 351-373 (SDNSNSNVTLESNSNYNSSTING) has biased composition (polar residues). The segment covering 374–387 (QEQQEQQEQQQQQQ) has biased composition (low complexity). Over residues 393-408 (DEGEIEQDDDNIEVYD) the composition is skewed to acidic residues. The segment covering 410–424 (DYQKKLEEHQKELLE) has biased composition (basic and acidic residues). Acidic residues-rich tracts occupy residues 433–454 (STDENEVYEQEEEEEEEDEEEQ), 480–496 (DDEDDDDDEEDEEEGDE), and 503–523 (DFDEDDEDDEEYDEDEDDEDE). Composition is skewed to low complexity over residues 526–542 (IQYYQQQLQYQQQLQKQ) and 564–585 (RQLQQQQQQQQQQQQQQQQHQQ). The segment covering 587-602 (YDDDDDDDDEEEEEYD) has biased composition (acidic residues). Positions 603–639 (DVIRHDTDSEEESKDKTPLPWDQHFEKQKESENKVEQ) are enriched in basic and acidic residues. The span at 650 to 661 (QETEQQQQQQQQ) shows a compositional bias: low complexity. The segment covering 670 to 801 (PTKVEDVKVE…EPVEEVKVEE (132 aa)) has biased composition (basic and acidic residues). The tract at residues 676–978 (VKVETEEQTK…PVKVEVASPV (303 aa)) is 40 X 9 AA approximate repeats of V-K-V-E-E-P-V-E-E. The segment covering 802–816 (PVEEVEAEESVQEPV) has biased composition (acidic residues). 2 stretches are compositionally biased toward basic and acidic residues: residues 817 to 884 (EEVK…SVED) and 946 to 971 (IKVEEPIKVEEPIKVEEPIKVEEPVK). Composition is skewed to low complexity over residues 972–985 (VEVASPVVQEQPPQ) and 992–1011 (VVSTSTITIASSPQQSSNSP). Over residues 1016–1031 (VKQPQQQEIEVNSTPI) the composition is skewed to polar residues. A compositionally biased stretch (low complexity) spans 1032-1050 (KQQQQQQQTPTQQTQTPTK).

The protein belongs to the protein kinase superfamily. TKL Ser/Thr protein kinase family.

It carries out the reaction L-seryl-[protein] + ATP = O-phospho-L-seryl-[protein] + ADP + H(+). It catalyses the reaction L-threonyl-[protein] + ATP = O-phospho-L-threonyl-[protein] + ADP + H(+). The chain is Probable serine/threonine-protein kinase kinX (kinX) from Dictyostelium discoideum (Social amoeba).